The chain runs to 290 residues: 1D-myo-inositol 2-acetamido-2-deoxy-alpha-D-glucopyranoside deacetylase (290 aa).

Zn(2+) is bound by residues His-17, Asp-20, and His-150.

The protein belongs to the MshB deacetylase family. Requires Zn(2+) as cofactor.

It catalyses the reaction 1D-myo-inositol 2-acetamido-2-deoxy-alpha-D-glucopyranoside + H2O = 1D-myo-inositol 2-amino-2-deoxy-alpha-D-glucopyranoside + acetate. Functionally, catalyzes the deacetylation of 1D-myo-inositol 2-acetamido-2-deoxy-alpha-D-glucopyranoside (GlcNAc-Ins) in the mycothiol biosynthesis pathway. The protein is 1D-myo-inositol 2-acetamido-2-deoxy-alpha-D-glucopyranoside deacetylase of Corynebacterium glutamicum (strain R).